The sequence spans 322 residues: Cyanophycinase (322 aa).

Active-site charge relay system residues include Ser-178, Glu-196, and His-220.

Belongs to the peptidase S51 family.

The catalysed reaction is [L-4-(L-arginin-2-N-yl)aspartate](n) + H2O = [L-4-(L-arginin-2-N-yl)aspartate](n-1) + L-4-(L-arginin-2-N-yl)aspartate. Exopeptidase that catalyzes the hydrolytic cleavage of multi-L-arginyl-poly-L-aspartic acid (cyanophycin; a water-insoluble reserve polymer) into aspartate-arginine dipeptides. In Synechococcus elongatus, this protein is Cyanophycinase (cphB).